The primary structure comprises 1085 residues: Translation factor GUF1 homolog, mitochondrial (1085 aa).

Residues 232–409 form the tr-type G domain; it reads KYIRNFCILA…RIISDIPPPI (178 aa). GTP is bound by residues 241 to 248, 302 to 306, and 356 to 359; these read AHIDSGKS, DTPGH, and NKID.

This sequence belongs to the TRAFAC class translation factor GTPase superfamily. Classic translation factor GTPase family. LepA subfamily.

Its subcellular location is the mitochondrion inner membrane. The enzyme catalyses GTP + H2O = GDP + phosphate + H(+). Functionally, promotes mitochondrial protein synthesis. May act as a fidelity factor of the translation reaction, by catalyzing a one-codon backward translocation of tRNAs on improperly translocated ribosomes. Binds to mitochondrial ribosomes in a GTP-dependent manner. This chain is Translation factor GUF1 homolog, mitochondrial, found in Plasmodium falciparum (isolate 3D7).